We begin with the raw amino-acid sequence, 297 residues long: Acetyl-coenzyme A carboxylase carboxyl transferase subunit beta (297 aa).

The region spanning 27–296 is the CoA carboxyltransferase N-terminal domain; sequence LWHKCPACEA…PEQAREAAAV (270 aa). Residues Cys-31, Cys-34, Cys-50, and Cys-53 each contribute to the Zn(2+) site. A C4-type zinc finger spans residues 31-53; sequence CPACEAVLYRPELEKTLDVCPKC.

The protein belongs to the AccD/PCCB family. As to quaternary structure, acetyl-CoA carboxylase is a heterohexamer composed of biotin carboxyl carrier protein (AccB), biotin carboxylase (AccC) and two subunits each of ACCase subunit alpha (AccA) and ACCase subunit beta (AccD). Requires Zn(2+) as cofactor.

The protein localises to the cytoplasm. The catalysed reaction is N(6)-carboxybiotinyl-L-lysyl-[protein] + acetyl-CoA = N(6)-biotinyl-L-lysyl-[protein] + malonyl-CoA. Its pathway is lipid metabolism; malonyl-CoA biosynthesis; malonyl-CoA from acetyl-CoA: step 1/1. Its function is as follows. Component of the acetyl coenzyme A carboxylase (ACC) complex. Biotin carboxylase (BC) catalyzes the carboxylation of biotin on its carrier protein (BCCP) and then the CO(2) group is transferred by the transcarboxylase to acetyl-CoA to form malonyl-CoA. This chain is Acetyl-coenzyme A carboxylase carboxyl transferase subunit beta, found in Pseudomonas putida (strain W619).